The following is a 1109-amino-acid chain: Hybrid signal transduction histidine kinase F (1109 aa).

Residues 237–289 enclose the PAC domain; it reads LSTETTITKKNGEKYPAEVFVKEISDIHSNSIGIMIIVRDITDQIRLKEMNIE. One can recognise a Histidine kinase domain in the interval 324-547; sequence TISHEIRTPL…LFSVTLNFEQ (224 aa). His-327 is modified (phosphohistidine; by autocatalysis). A coiled-coil region spans residues 719–760; it reads SNLIQTISQIDNQQQQQQQQLQQQEQEQQHQQQQLQQEQQFV. The segment covering 739–758 has biased composition (low complexity); that stretch reads LQQQEQEQQHQQQQLQQEQQ. Residues 739-819 are disordered; sequence LQQQEQEQQH…TSSDSGESDE (81 aa). A compositionally biased stretch (basic and acidic residues) spans 767-782; that stretch reads DSSEKKTTPKKDRGKY. In terms of domain architecture, Response regulatory spans 928 to 1048; the sequence is RILLVDDNAV…PLGELVKKYL (121 aa). Asp-977 is modified (4-aspartylphosphate). Positions 1052-1099 are enriched in low complexity; it reads NNNNNNNNNNNNNNNNNSNNNNSNSNSNPNSNSNSNSNSNSNPNQNPN. The tract at residues 1052–1109 is disordered; the sequence is NNNNNNNNNNNNNNNNNSNNNNSNSNSNPNSNSNSNSNSNSNPNQNPNYCNNLPTDFI. Over residues 1100–1109 the composition is skewed to polar residues; that stretch reads YCNNLPTDFI.

The catalysed reaction is ATP + protein L-histidine = ADP + protein N-phospho-L-histidine.. In terms of biological role, acts as a receptor histidine kinase for a signal transduction pathway. This protein undergoes an ATP-dependent autophosphorylation at a conserved histidine residue in the kinase core, and a phosphoryl group is then transferred to a conserved aspartate residue in the receiver domain. The protein is Hybrid signal transduction histidine kinase F (dhkF) of Dictyostelium discoideum (Social amoeba).